The following is a 265-amino-acid chain: MLRRFAVIGHPIAHSLSPVIHQMFAQQTQIELIYEKILGDDVKFEQQISDFFIQYGNGLNVTLPYKKRAYELAKIRTQRCTLAGAANTLWMEENQLHADNTDGIGLIRDLSRFLELKDKKILILGAGGAARGIIFPLLEAKPLQLIVANRTLEKAEELQRQFPQINVTSFAELTEFFDLIINATSTSLSGQVIVLPEEVLSHKPFCYDLAYNQKTSTAFVQYARNGGCEAVDGLGMLVEQAAEAFFTWNKVMPSTQKILEHLRSF.

Shikimate-binding positions include serine 15–serine 17 and threonine 62. The Proton acceptor role is filled by lysine 66. Residues asparagine 87 and aspartate 102 each contribute to the shikimate site. Residues glycine 125–alanine 129, asparagine 149–lysine 154, and leucine 209 each bind NADP(+). Tyrosine 211 lines the shikimate pocket. Glycine 233 is an NADP(+) binding site.

Belongs to the shikimate dehydrogenase family. Homodimer.

It carries out the reaction shikimate + NADP(+) = 3-dehydroshikimate + NADPH + H(+). The protein operates within metabolic intermediate biosynthesis; chorismate biosynthesis; chorismate from D-erythrose 4-phosphate and phosphoenolpyruvate: step 4/7. Functionally, involved in the biosynthesis of the chorismate, which leads to the biosynthesis of aromatic amino acids. Catalyzes the reversible NADPH linked reduction of 3-dehydroshikimate (DHSA) to yield shikimate (SA). The polypeptide is Shikimate dehydrogenase (NADP(+)) (Legionella pneumophila subsp. pneumophila (strain Philadelphia 1 / ATCC 33152 / DSM 7513)).